Reading from the N-terminus, the 344-residue chain is Gibberellin receptor GID1C (344 aa).

Ala2 is subject to N-acetylalanine. The short motif at 111–113 is the Involved in the stabilization of the negatively charged intermediate by the formation of the oxyanion hole element; the sequence is HGG. Gibberellin A4 is bound by residues 113-114, Tyr125, and Ser189; that span reads GS. The gibberellin A3 site is built by Ser114, Tyr125, Ser189, and Phe236. Ser189 is a catalytic residue. The active site involves Asp287. Position 318 (Gly318) interacts with gibberellin A4. Gly318 contributes to the gibberellin A3 binding site.

Belongs to the 'GDXG' lipolytic enzyme family. In terms of assembly, interacts with the DELLA proteins GAI, RGA, RGL1, RGL2 and RGL3 in a GA-dependent manner. In terms of tissue distribution, widely expressed.

The protein localises to the nucleus. Functionally, functions as a soluble gibberellin (GA) receptor. GA is an essential hormone that regulates growth and development in plants. Binds with high affinity the biologically active gibberellin GA4, but has no affinity for the biologically inactive GAs. In response to GA, interacts with specific DELLA proteins, known as repressors of GA-induced growth, and targets them for degradation via proteasome. Seems to be required for GA signaling that controls root growth, seed germination and stem elongation. Partially redundant with GID1A and GID1B. This is Gibberellin receptor GID1C (GID1C) from Arabidopsis thaliana (Mouse-ear cress).